A 152-amino-acid polypeptide reads, in one-letter code: 3-dehydroquinate dehydratase (152 aa).

Residue Tyr26 is the Proton acceptor of the active site. Residues Asn78, His84, and Asp91 each contribute to the substrate site. His104 functions as the Proton donor in the catalytic mechanism. Substrate contacts are provided by residues 105–106 and Arg115; that span reads LS.

Belongs to the type-II 3-dehydroquinase family. As to quaternary structure, homododecamer.

It catalyses the reaction 3-dehydroquinate = 3-dehydroshikimate + H2O. The protein operates within metabolic intermediate biosynthesis; chorismate biosynthesis; chorismate from D-erythrose 4-phosphate and phosphoenolpyruvate: step 3/7. In terms of biological role, catalyzes a trans-dehydration via an enolate intermediate. The chain is 3-dehydroquinate dehydratase from Idiomarina loihiensis (strain ATCC BAA-735 / DSM 15497 / L2-TR).